A 128-amino-acid polypeptide reads, in one-letter code: Gene 39 protein (128 aa).

This is Gene 39 protein (39) from Mycobacterium (Mycobacteriophage D29).